A 678-amino-acid chain; its full sequence is ABC transporter B family member 6 (678 aa).

A run of 6 helical transmembrane segments spans residues 95–115 (IILC…VPLI), 128–148 (EWHL…IWDI), 206–226 (LLFN…FLLF), 230–250 (AEFA…TLYV), 314–334 (FLLN…GLGL), and 346–366 (LGDV…LSWL). The 281-residue stretch at 95-375 (IILCVSIIFF…LGSSYRMILT (281 aa)) folds into the ABC transmembrane type-1 domain. One can recognise an ABC transporter domain in the interval 418 to 660 (IEFRNISFTY…NGDYAHLWNQ (243 aa)). Residues Tyr-427 and 459 to 470 (GSTGGGKSTIFR) contribute to the ATP site.

It belongs to the ABC transporter superfamily. ABCB family. Heavy Metal importer (TC 3.A.1.210) subfamily.

Its subcellular location is the membrane. In Dictyostelium discoideum (Social amoeba), this protein is ABC transporter B family member 6 (abcB6).